The sequence spans 528 residues: Tyrosine-protein kinase transforming protein Yes (528 aa).

The span at 1-12 (DKGPAMKYRTDN) shows a compositional bias: basic and acidic residues. Positions 1–35 (DKGPAMKYRTDNTPEPISSHVSHYGSDSSQATQSP) are disordered. Residues 18–29 (SSHVSHYGSDSS) are compositionally biased toward low complexity. Positions 81 to 142 (GGGTVFVALY…PSNYVAPADS (62 aa)) constitute an SH3 domain. The 98-residue stretch at 148-245 (WYFGKMGRKD…GLCHKLTTVC (98 aa)) folds into the SH2 domain. Positions 267 to 520 (LRLEVKLGQG…YIQSFLEDYF (254 aa)) constitute a Protein kinase domain. ATP-binding positions include 273 to 281 (LGQGCFGEV) and Lys295. Asp386 acts as the Proton acceptor in catalysis. Tyr416 carries the post-translational modification Phosphotyrosine; by autocatalysis.

This sequence belongs to the protein kinase superfamily. Tyr protein kinase family. SRC subfamily.

The enzyme catalyses L-tyrosyl-[protein] + ATP = O-phospho-L-tyrosyl-[protein] + ADP + H(+). The polypeptide is Tyrosine-protein kinase transforming protein Yes (V-YES) (Galliformes (Y73SV)).